Reading from the N-terminus, the 244-residue chain is MSAAAYMDFVAAQCLVSISNRAAVPEHGVAPDAERLRLPEREVTKEHGDPGDTWKDYCTLVTIAKSLLDLNKYRPIQTPSVCSDSLESPDEDMGSDSDVTTESGSSPSHSPEERQDPGSAPSPLSLLHPGVAAKGKHASEKRHKCPYSGCGKVYGKSSHLKAHYRVHTGERPFPCTWPDCLKKFSRSDELTRHYRTHTGEKQFRCPLCEKRFMRSDHLTKHARRHTEFHPSMIKRSKKALANAL.

Residues 80–142 form a disordered region; sequence SVCSDSLESP…AKGKHASEKR (63 aa). Ser-122 is subject to Phosphoserine. 3 consecutive C2H2-type zinc fingers follow at residues 143–167, 173–197, and 203–225; these read HKCP…YRVH, FPCT…YRTH, and FRCP…ARRH.

Belongs to the Sp1 C2H2-type zinc-finger protein family. As to quaternary structure, interacts with ZZEF1. As to expression, epidermis (at protein level).

Its subcellular location is the nucleus. Functionally, transcription factor that binds to GC box promoter elements. Selectively activates mRNA synthesis from genes containing tandem repeats of GC boxes but represses genes with a single GC box. Acts as an epidermal circadian transcription factor regulating keratinocyte proliferation. The protein is Krueppel-like factor 9 (KLF9) of Homo sapiens (Human).